Reading from the N-terminus, the 562-residue chain is MGQTLSRADYAALYGPTTGDRIRLADTELLIEVERDLTIPGEEVRFGGGKVVRDGMGQSQVTREAGAMDTVITGAVVFDHQGITKADVGLRDGRIAGIGKAGNPDTQPGVTLIIGPGTEIIAGEGRILTPGGMDCHIHFICPQQVDHALHSGVTTLLGGGTGPAHGTLATTCTPGPWHIARMLEACAELPVNIGIAGKGNASLPAALEEQVRAGACALKLHEDWGTTPAAIDCCLTVADAMDVQVMIHTDTLNESGFVEDTMAAIAGRTIHAYHTEGAGGGHAPDIIRMVGMGNVLPSSTNPTRPYTGNTIEEHLDMLMVCHHLDRRVPEDVAFAESRIRRETIAAEDILHDLGAFSVISSDSQAMGRIGEVIIRTWQTADKMRRQRGRLAGETGENDNLRARRYIAKYTINPAIAHGISTHVGSIEPGKRADLVLWSPAFFGVKPEMVLVGGRISVAQMGDPNGSIPVQPIFSRPMWGHAGRASALFLSRAGLEAGAGDGLGKALIAVEQTRGIGKADMVLNDAMPQIEVDPETYEVRADGELLTCEPATELPMAQRYFLF.

Positions 131–562 (GGMDCHIHFI…LPMAQRYFLF (432 aa)) constitute a Urease domain. Ni(2+) contacts are provided by H136, H138, and K219. K219 is subject to N6-carboxylysine. A substrate-binding site is contributed by H221. Ni(2+) is bound by residues H248 and H274. Residue H322 is the Proton donor of the active site. Ni(2+) is bound at residue D362.

Belongs to the metallo-dependent hydrolases superfamily. Urease alpha subunit family. Heterotrimer of UreA (gamma), UreB (beta) and UreC (alpha) subunits. Three heterotrimers associate to form the active enzyme. Ni cation serves as cofactor. Carboxylation allows a single lysine to coordinate two nickel ions.

The protein localises to the cytoplasm. The catalysed reaction is urea + 2 H2O + H(+) = hydrogencarbonate + 2 NH4(+). It functions in the pathway nitrogen metabolism; urea degradation; CO(2) and NH(3) from urea (urease route): step 1/1. The chain is Urease subunit alpha from Paracoccus denitrificans (strain Pd 1222).